Consider the following 327-residue polypeptide: Methionyl-tRNA formyltransferase (327 aa).

121–124 is a (6S)-5,6,7,8-tetrahydrofolate binding site; the sequence is SLLP.

This sequence belongs to the Fmt family.

The enzyme catalyses L-methionyl-tRNA(fMet) + (6R)-10-formyltetrahydrofolate = N-formyl-L-methionyl-tRNA(fMet) + (6S)-5,6,7,8-tetrahydrofolate + H(+). Functionally, attaches a formyl group to the free amino group of methionyl-tRNA(fMet). The formyl group appears to play a dual role in the initiator identity of N-formylmethionyl-tRNA by promoting its recognition by IF2 and preventing the misappropriation of this tRNA by the elongation apparatus. The sequence is that of Methionyl-tRNA formyltransferase from Burkholderia pseudomallei (strain 1710b).